The following is a 143-amino-acid chain: Nucleoside diphosphate kinase (143 aa).

Residues K11, F59, R87, T93, R104, and N114 each contribute to the ATP site. The active-site Pros-phosphohistidine intermediate is the H117.

The protein belongs to the NDK family. As to quaternary structure, homotetramer. It depends on Mg(2+) as a cofactor.

The protein resides in the cytoplasm. It catalyses the reaction a 2'-deoxyribonucleoside 5'-diphosphate + ATP = a 2'-deoxyribonucleoside 5'-triphosphate + ADP. The enzyme catalyses a ribonucleoside 5'-diphosphate + ATP = a ribonucleoside 5'-triphosphate + ADP. Major role in the synthesis of nucleoside triphosphates other than ATP. The ATP gamma phosphate is transferred to the NDP beta phosphate via a ping-pong mechanism, using a phosphorylated active-site intermediate. The polypeptide is Nucleoside diphosphate kinase (Shewanella baltica (strain OS223)).